Here is a 189-residue protein sequence, read N- to C-terminus: Elongation factor P (189 aa).

The protein belongs to the elongation factor P family.

The protein resides in the cytoplasm. It functions in the pathway protein biosynthesis; polypeptide chain elongation. Its function is as follows. Involved in peptide bond synthesis. Stimulates efficient translation and peptide-bond synthesis on native or reconstituted 70S ribosomes in vitro. Probably functions indirectly by altering the affinity of the ribosome for aminoacyl-tRNA, thus increasing their reactivity as acceptors for peptidyl transferase. The protein is Elongation factor P of Campylobacter jejuni subsp. doylei (strain ATCC BAA-1458 / RM4099 / 269.97).